We begin with the raw amino-acid sequence, 449 residues long: MDSLEIEVIPRPDKDDRYTIKPLKDTLSFDKGFFLAVRAIQSIRKKSQGSVIVVGIAGPSGAGKTSIAQKIVSVLPKSILISLDNYLDSSRQIIEENYDDYRLVDFELLKKNISDLISNKPTDLPLYDFTKSGRYAYKRVQPPESKVLLIEGIYALHEEIRHLLDLRVSISGGVHFDLIKRIFRDVHRTGQQPHESLQQITDTVYPMYKAFIEPDLQLAEIQVVNKFNPFGGLLNPIYILKSVKQGVTVDMIHSVLNKSTIQENTARYYDIYLIPPNTTFANSSSCDWIRVRNADGQYSIMFSEEIKEGPFIISPRVDFVVGVNMLGGLMSLGYQMVAIIHRKSTIFKDGKIIISYDELEELGQTFVQIKGFDATSVQEAGKKLGLENNYLQKSYIELYQDKYKKSLSDNSTVTTLPIGGINNNNTINNNNNNNNNNNLSLSNFINSKL.

58 to 65 (GPSGAGKT) serves as a coordination point for ATP. In terms of domain architecture, CYTH spans 235 to 401 (NPIYILKSVK…QKSYIELYQD (167 aa)).

It belongs to the uridine kinase family.

It carries out the reaction uridine + ATP = UMP + ADP + H(+). The enzyme catalyses cytidine + ATP = CMP + ADP + H(+). It participates in pyrimidine metabolism; CTP biosynthesis via salvage pathway; CTP from cytidine: step 1/3. The protein operates within pyrimidine metabolism; UMP biosynthesis via salvage pathway; UMP from uridine: step 1/1. In terms of biological role, catalyzes the conversion of uridine into uridine monophosphate and cytidine into cytidine monophosphate in the pyrimidine salvage pathway. This Dictyostelium discoideum (Social amoeba) protein is Uridine-cytidine kinase C (udkC).